The following is a 195-amino-acid chain: NAD(P)H-quinone oxidoreductase subunit J, chloroplastic (195 aa).

This sequence belongs to the complex I 30 kDa subunit family. As to quaternary structure, NDH is composed of at least 16 different subunits, 5 of which are encoded in the nucleus.

The protein localises to the plastid. It is found in the chloroplast thylakoid membrane. It carries out the reaction a plastoquinone + NADH + (n+1) H(+)(in) = a plastoquinol + NAD(+) + n H(+)(out). The enzyme catalyses a plastoquinone + NADPH + (n+1) H(+)(in) = a plastoquinol + NADP(+) + n H(+)(out). Its function is as follows. NDH shuttles electrons from NAD(P)H:plastoquinone, via FMN and iron-sulfur (Fe-S) centers, to quinones in the photosynthetic chain and possibly in a chloroplast respiratory chain. The immediate electron acceptor for the enzyme in this species is believed to be plastoquinone. Couples the redox reaction to proton translocation, and thus conserves the redox energy in a proton gradient. In Chlorokybus atmophyticus (Soil alga), this protein is NAD(P)H-quinone oxidoreductase subunit J, chloroplastic.